The sequence spans 328 residues: Malate dehydrogenase (328 aa).

NAD(+) is bound at residue 11 to 17; that stretch reads GAAGQIG. Residues Arg-94 and Arg-100 each coordinate substrate. Residues Asn-107, Gln-114, and 131–133 each bind NAD(+); that span reads VGN. Substrate is bound by residues Asn-133 and Arg-164. Residue His-189 is the Proton acceptor of the active site.

It belongs to the LDH/MDH superfamily. MDH type 2 family.

The catalysed reaction is (S)-malate + NAD(+) = oxaloacetate + NADH + H(+). Catalyzes the reversible oxidation of malate to oxaloacetate. This is Malate dehydrogenase from Xylella fastidiosa (strain M23).